The chain runs to 381 residues: Creatine kinase M-type (381 aa).

The Phosphagen kinase N-terminal domain occupies 11 to 98 (KLNYKPEEEY…FDPIISDRHG (88 aa)). One can recognise a Phosphagen kinase C-terminal domain in the interval 125–367 (YVLSSRVRTG…KLMVEMEKKL (243 aa)). ATP is bound at residue 128–132 (SSRVR). S164 carries the post-translational modification Phosphoserine. T166 is modified (phosphothreonine). S178 carries the phosphoserine modification. Phosphothreonine is present on T180. H191 is a binding site for ATP. A Phosphoserine modification is found at S199. ATP contacts are provided by R236 and R292. Residues T313 and T322 each carry the phosphothreonine modification. ATP is bound by residues 320-325 (RGTGGV) and D335. A Phosphoserine modification is found at S372.

The protein belongs to the ATP:guanido phosphotransferase family. In terms of assembly, dimer of identical or non-identical chains, which can be either B (brain type) or M (muscle type). With MM being the major form in skeletal muscle and myocardium, MB existing in myocardium, and BB existing in many tissues, especially brain.

It is found in the cytoplasm. It carries out the reaction creatine + ATP = N-phosphocreatine + ADP + H(+). Reversibly catalyzes the transfer of phosphate between ATP and various phosphogens (e.g. creatine phosphate). Creatine kinase isoenzymes play a central role in energy transduction in tissues with large, fluctuating energy demands, such as skeletal muscle, heart, brain and spermatozoa. This is Creatine kinase M-type (CKM) from Homo sapiens (Human).